We begin with the raw amino-acid sequence, 132 residues long: Small ribosomal subunit protein uS8c (132 aa).

Belongs to the universal ribosomal protein uS8 family. As to quaternary structure, part of the 30S ribosomal subunit.

The protein resides in the plastid. It is found in the chloroplast. Functionally, one of the primary rRNA binding proteins, it binds directly to 16S rRNA central domain where it helps coordinate assembly of the platform of the 30S subunit. The protein is Small ribosomal subunit protein uS8c (rps8) of Angiopteris evecta (Mule's foot fern).